The primary structure comprises 93 residues: Large ribosomal subunit protein uL23 (93 aa).

This sequence belongs to the universal ribosomal protein uL23 family. As to quaternary structure, part of the 50S ribosomal subunit. Contacts protein L29, and trigger factor when it is bound to the ribosome.

Functionally, one of the early assembly proteins it binds 23S rRNA. One of the proteins that surrounds the polypeptide exit tunnel on the outside of the ribosome. Forms the main docking site for trigger factor binding to the ribosome. The sequence is that of Large ribosomal subunit protein uL23 from Aliarcobacter butzleri (strain RM4018) (Arcobacter butzleri).